A 595-amino-acid chain; its full sequence is Beta-lactamase-like protein ARB_00930 (595 aa).

Residues 1 to 18 (MVVCFLWLLLPYAATTLS) form the signal peptide. Asn-70 and Asn-102 each carry an N-linked (GlcNAc...) asparagine glycan. Ser-117 (acyl-ester intermediate) is an active-site residue. 3 N-linked (GlcNAc...) asparagine glycosylation sites follow: Asn-147, Asn-156, and Asn-195. The Proton acceptor role is filled by Tyr-235. N-linked (GlcNAc...) asparagine glycosylation is found at Asn-249, Asn-461, and Asn-473.

Belongs to the beta-lactamase family.

It localises to the secreted. The enzyme catalyses a beta-lactam + H2O = a substituted beta-amino acid. The chain is Beta-lactamase-like protein ARB_00930 from Arthroderma benhamiae (strain ATCC MYA-4681 / CBS 112371) (Trichophyton mentagrophytes).